The primary structure comprises 598 residues: Elongation factor 4 (598 aa).

The 183-residue stretch at 2–184 (KNIRNFSIIA…EIVRCIPPPV (183 aa)) folds into the tr-type G domain. GTP is bound by residues 14 to 19 (DHGKST) and 131 to 134 (NKID).

Belongs to the TRAFAC class translation factor GTPase superfamily. Classic translation factor GTPase family. LepA subfamily.

It localises to the cell inner membrane. The enzyme catalyses GTP + H2O = GDP + phosphate + H(+). In terms of biological role, required for accurate and efficient protein synthesis under certain stress conditions. May act as a fidelity factor of the translation reaction, by catalyzing a one-codon backward translocation of tRNAs on improperly translocated ribosomes. Back-translocation proceeds from a post-translocation (POST) complex to a pre-translocation (PRE) complex, thus giving elongation factor G a second chance to translocate the tRNAs correctly. Binds to ribosomes in a GTP-dependent manner. The polypeptide is Elongation factor 4 (Psychromonas ingrahamii (strain DSM 17664 / CCUG 51855 / 37)).